Here is a 258-residue protein sequence, read N- to C-terminus: Acyl-[acyl-carrier-protein]--UDP-N-acetylglucosamine O-acyltransferase (258 aa).

Belongs to the transferase hexapeptide repeat family. LpxA subfamily. As to quaternary structure, homotrimer.

The protein resides in the cytoplasm. It catalyses the reaction a (3R)-hydroxyacyl-[ACP] + UDP-N-acetyl-alpha-D-glucosamine = a UDP-3-O-[(3R)-3-hydroxyacyl]-N-acetyl-alpha-D-glucosamine + holo-[ACP]. Its pathway is glycolipid biosynthesis; lipid IV(A) biosynthesis; lipid IV(A) from (3R)-3-hydroxytetradecanoyl-[acyl-carrier-protein] and UDP-N-acetyl-alpha-D-glucosamine: step 1/6. Involved in the biosynthesis of lipid A, a phosphorylated glycolipid that anchors the lipopolysaccharide to the outer membrane of the cell. In Thermodesulfovibrio yellowstonii (strain ATCC 51303 / DSM 11347 / YP87), this protein is Acyl-[acyl-carrier-protein]--UDP-N-acetylglucosamine O-acyltransferase.